The following is a 405-amino-acid chain: Lipase lipl-1 (405 aa).

The N-terminal stretch at 1–20 (MRSWSTVMLAVLATAATVFG) is a signal peptide. Asn-66 is a glycosylation site (N-linked (GlcNAc...) asparagine). Residue Ser-169 is the Nucleophile of the active site. Asn-273 carries N-linked (GlcNAc...) asparagine glycosylation. Active-site charge relay system residues include Asp-344 and His-376.

It belongs to the AB hydrolase superfamily. Lipase family.

The protein localises to the secreted. Its subcellular location is the lysosome lumen. In terms of biological role, lipase that, together with lipl-3, plays a role in the response to nutrient deprivation by controlling lipid metabolism. Specifically, involved in the breakdown of lipids during lipophagy, a process during which lipids contained in lipid droplets that have been delivered to lysosomes by autophagy are degraded. This chain is Lipase lipl-1, found in Caenorhabditis elegans.